A 203-amino-acid polypeptide reads, in one-letter code: Probable GTP-binding protein EngB (203 aa).

Positions 21-196 (GAPEIAFLGR…WKKIFEAAGT (176 aa)) constitute an EngB-type G domain. GTP is bound by residues 29-36 (GRSNVGKS), 55-59 (GRTQT), 79-82 (DLPG), 146-149 (TKID), and 175-177 (FSA). Mg(2+)-binding residues include Ser36 and Thr57.

This sequence belongs to the TRAFAC class TrmE-Era-EngA-EngB-Septin-like GTPase superfamily. EngB GTPase family. It depends on Mg(2+) as a cofactor.

Functionally, necessary for normal cell division and for the maintenance of normal septation. The chain is Probable GTP-binding protein EngB from Koribacter versatilis (strain Ellin345).